A 355-amino-acid chain; its full sequence is Putative GPI-anchor transamidase (355 aa).

The first 24 residues, 1–24 (MFNIMLVKFVVIFALILASCRVEA), serve as a signal peptide directing secretion. Residues His-165 and Cys-207 contribute to the active site.

The protein belongs to the peptidase C13 family.

It functions in the pathway glycolipid biosynthesis; glycosylphosphatidylinositol-anchor biosynthesis. Functionally, mediates GPI anchoring in the endoplasmic reticulum, by replacing a protein's C-terminal GPI attachment signal peptide with a pre-assembled GPI. During this transamidation reaction, the GPI transamidase forms a carbonyl intermediate with the substrate protein. This chain is Putative GPI-anchor transamidase, found in Drosophila melanogaster (Fruit fly).